We begin with the raw amino-acid sequence, 606 residues long: Endo-beta-1,4-xylanase Xyn10C (606 aa).

The first 19 residues, 1–19, serve as a signal peptide directing secretion; that stretch reads MKKIQQLLMLSLISSTLIA. The N-palmitoyl cysteine moiety is linked to residue Cys20. Cys20 carries S-diacylglycerol cysteine lipidation. The disordered stretch occupies residues 23–64; it reads GGGGGSTPTTSSSPQSSSPASTPSSASSSSIISSSSLSSSLS. Residues 29-64 are compositionally biased toward low complexity; that stretch reads TPTTSSSPQSSSPASTPSSASSSSIISSSSLSSSLS. The CBM15 domain maps to 91–242; it reads GNVVIEVDMA…KSVTITLAQE (152 aa). Residues Asn106 and Gln171 each coordinate a carbohydrate. The cysteines at positions 183 and 200 are disulfide-linked. A carbohydrate is bound at residue Gln217. Residues 245–596 form the GH10 domain; it reads SANVDHLRDL…KPALRGFADA (352 aa). Residues 296–299, His332, and Asn384 contribute to the substrate site; that span reads NIMK. Glu385 (proton donor) is an active-site residue. The active-site Nucleophile is Glu497. Trp552 serves as a coordination point for substrate.

Belongs to the glycosyl hydrolase 10 (cellulase F) family.

The protein resides in the cell outer membrane. The enzyme catalyses Endohydrolysis of (1-&gt;4)-beta-D-xylosidic linkages in xylans.. It participates in glycan degradation; xylan degradation. Functionally, endo-acting xylanase which specifically cleaves internal linkages on the xylan backbone, releasing xylooligosaccharides. Is able to hydrolyze oat spelt xylan, the arabinoxylans from wheat and rye, and glucuronoxylan. Also displays very low activity against xylooligosaccharides. During the xylan degradation process, Xyn10C may act on the soluble xylans and long xylooligosaccharides products released by the secreted xylanases Xyn11A, Xyn11B and Xyn10A. This is Endo-beta-1,4-xylanase Xyn10C (xyn10C) from Cellvibrio japonicus (Pseudomonas fluorescens subsp. cellulosa).